A 211-amino-acid polypeptide reads, in one-letter code: Imidazole glycerol phosphate synthase subunit HisH (211 aa).

The Glutamine amidotransferase type-1 domain occupies Val3 to Ala211. The active-site Nucleophile is Cys81. Catalysis depends on residues His186 and Glu188.

Heterodimer of HisH and HisF.

It is found in the cytoplasm. It catalyses the reaction 5-[(5-phospho-1-deoxy-D-ribulos-1-ylimino)methylamino]-1-(5-phospho-beta-D-ribosyl)imidazole-4-carboxamide + L-glutamine = D-erythro-1-(imidazol-4-yl)glycerol 3-phosphate + 5-amino-1-(5-phospho-beta-D-ribosyl)imidazole-4-carboxamide + L-glutamate + H(+). The catalysed reaction is L-glutamine + H2O = L-glutamate + NH4(+). It functions in the pathway amino-acid biosynthesis; L-histidine biosynthesis; L-histidine from 5-phospho-alpha-D-ribose 1-diphosphate: step 5/9. Functionally, IGPS catalyzes the conversion of PRFAR and glutamine to IGP, AICAR and glutamate. The HisH subunit catalyzes the hydrolysis of glutamine to glutamate and ammonia as part of the synthesis of IGP and AICAR. The resulting ammonia molecule is channeled to the active site of HisF. This Nostoc punctiforme (strain ATCC 29133 / PCC 73102) protein is Imidazole glycerol phosphate synthase subunit HisH.